A 281-amino-acid chain; its full sequence is Nhr-229 coiled coil domain containing nccd-1 (281 aa).

This chain is Nhr-229 coiled coil domain containing nccd-1, found in Caenorhabditis elegans.